Here is a 345-residue protein sequence, read N- to C-terminus: Krueppel-like factor 3 (345 aa).

A repressor domain region spans residues methionine 1–serine 74. A Glycyl lysine isopeptide (Lys-Gly) (interchain with G-Cter in SUMO) cross-link involves residue lysine 10. The 9aaTAD; inactive motif lies at glutamate 60–lysine 68. The CTBP-binding motif signature appears at proline 61–threonine 65. The interval valine 66–proline 112 is disordered. A Glycyl lysine isopeptide (Lys-Gly) (interchain with G-Cter in SUMO2) cross-link involves residue lysine 68. Composition is skewed to low complexity over residues serine 70–serine 81 and serine 92–serine 108. 5 positions are modified to phosphoserine: serine 71, serine 92, serine 101, serine 108, and serine 111. Glycyl lysine isopeptide (Lys-Gly) (interchain with G-Cter in SUMO2) cross-links involve residues lysine 196 and lysine 198. Phosphoserine is present on residues serine 216, serine 224, and serine 250. C2H2-type zinc fingers lie at residues histidine 260–histidine 284, tyrosine 290–histidine 314, and phenylalanine 320–histidine 342.

The protein belongs to the krueppel C2H2-type zinc-finger protein family. Monomer. Sumoylated with SUMO1. Sumoylation is enhanced by PIAS1, PIAS2alpha and PIAS2beta, and PIAS4, but not by Pc2. Enhances transcriptional repression, but has no effect on DNA binding. Sumoylation on Lys-198 is the major site.

It localises to the nucleus. Binds to the CACCC box of erythroid cell-expressed genes. May play a role in hematopoiesis. The chain is Krueppel-like factor 3 (KLF3) from Homo sapiens (Human).